Reading from the N-terminus, the 86-residue chain is Large ribosomal subunit protein bL27 (86 aa).

The disordered stretch occupies residues 1-21 (MAHKKGGGSSRNGRDSESKRL).

Belongs to the bacterial ribosomal protein bL27 family.

The sequence is that of Large ribosomal subunit protein bL27 from Rubrobacter xylanophilus (strain DSM 9941 / JCM 11954 / NBRC 16129 / PRD-1).